Here is a 564-residue protein sequence, read N- to C-terminus: Kelch-like protein 12 (564 aa).

One can recognise a BTB domain in the interval 29–96 (CDITLRVEGT…VYTETVLVTV (68 aa)). In terms of domain architecture, BACK spans 131–232 (CLGIRDFAET…LTPRYITDVI (102 aa)). 6 Kelch repeats span residues 278 to 325 (VLLV…ALND), 327 to 375 (VYVI…TLGD), 376 to 422 (MIYV…VASG), 423 to 469 (LIYC…LLND), 471 to 516 (IYVV…VLRG), and 518 to 563 (LYAI…VLRE).

Component of the BCR(KLHL12) E3 ubiquitin ligase complex.

It localises to the cytoplasmic vesicle. The protein resides in the COPII-coated vesicle. It functions in the pathway protein modification; protein ubiquitination. Its function is as follows. Substrate-specific adapter of a BCR (BTB-CUL3-RBX1) E3 ubiquitin ligase complex that acts as a negative regulator of Wnt signaling pathway and ER-Golgi transport. The BCR(KLHL12) complex is involved in ER-Golgi transport by regulating the size of COPII coats, thereby playing a key role in collagen export, which is required for embryonic stem (ES) cells division. Negatively regulates the Wnt signaling pathway, possibly via the targeted ubiquitination and subsequent proteolysis of dvl2 and dvl3. Regulates convergent-extension movements during early embryonic development. The sequence is that of Kelch-like protein 12 (klhl12) from Danio rerio (Zebrafish).